Reading from the N-terminus, the 100-residue chain is MQFYAIASLFLAGTAFAAPATSPNGYDACPDGGLIGTPQCCSLDLVGVLSGECSSPSKTPNSAKEFQEICAASGQKARCCFLSEVFTLGAFCQKPVGVTA.

The N-terminal stretch at 1–17 is a signal peptide; sequence MQFYAIASLFLAGTAFA. Disulfide bonds link cysteine 29/cysteine 79, cysteine 40/cysteine 70, cysteine 41/cysteine 53, and cysteine 80/cysteine 92.

The protein belongs to the cerato-ulmin hydrophobin family.

Its subcellular location is the secreted. It localises to the cell wall. Functionally, aerial growth, conidiation, and dispersal of filamentous fungi in the environment rely upon a capability of their secreting small amphipathic proteins called hydrophobins (HPBs) with low sequence identity. Class I can self-assemble into an outermost layer of rodlet bundles on aerial cell surfaces, conferring cellular hydrophobicity that supports fungal growth, development and dispersal; whereas Class II form highly ordered films at water-air interfaces through intermolecular interactions but contribute nothing to the rodlet structure. Does not seem to be important for the ability to cause seedling disease. The polypeptide is Class II hydrophobin 4 (Gibberella moniliformis (Maize ear and stalk rot fungus)).